The primary structure comprises 338 residues: Lipoate-protein ligase A (338 aa).

The 188-residue stretch at 29 to 216 (PATQRVLFLW…AFFAHYGERV (188 aa)) folds into the BPL/LPL catalytic domain. ATP is bound by residues Arg71, 76–79 (GAVF), and Lys134. Position 134 (Lys134) interacts with (R)-lipoate.

This sequence belongs to the LplA family. As to quaternary structure, monomer.

The protein localises to the cytoplasm. The enzyme catalyses L-lysyl-[lipoyl-carrier protein] + (R)-lipoate + ATP = N(6)-[(R)-lipoyl]-L-lysyl-[lipoyl-carrier protein] + AMP + diphosphate + H(+). Its pathway is protein modification; protein lipoylation via exogenous pathway; protein N(6)-(lipoyl)lysine from lipoate: step 1/2. The protein operates within protein modification; protein lipoylation via exogenous pathway; protein N(6)-(lipoyl)lysine from lipoate: step 2/2. Functionally, catalyzes both the ATP-dependent activation of exogenously supplied lipoate to lipoyl-AMP and the transfer of the activated lipoyl onto the lipoyl domains of lipoate-dependent enzymes. The polypeptide is Lipoate-protein ligase A (Shigella sonnei (strain Ss046)).